Here is a 224-residue protein sequence, read N- to C-terminus: Oxygen-evolving enhancer protein 3-1, chloroplastic (224 aa).

Residues 1–44 constitute a chloroplast transit peptide; that stretch reads MASMGGLHGASPAVLEGSLKINGSSRLNGSGRVAVAQRSRLVVR. A thylakoid-targeting transit peptide spans 45–75; that stretch reads AQQSEETSRRSVIGLVAAGLAGGSFVQAVLA. The residue at position 189 (Thr-189) is a Phosphothreonine. Residue Tyr-209 is modified to Phosphotyrosine. Thr-212 carries the post-translational modification Phosphothreonine.

It belongs to the PsbQ family. As to expression, expressed in green tissue, with high steady-state mRNA levels in leaves. Not expressed in roots.

It is found in the plastid. Its subcellular location is the chloroplast thylakoid membrane. Functionally, required for photosystem II assembly/stability and photoautotrophic growth under low light conditions. The chain is Oxygen-evolving enhancer protein 3-1, chloroplastic (PSBQ1) from Arabidopsis thaliana (Mouse-ear cress).